The primary structure comprises 277 residues: Shikimate dehydrogenase (NADP(+)) (277 aa).

Residues 15-17 (SLS) and T62 each bind shikimate. The active-site Proton acceptor is the K66. Shikimate-binding residues include N87 and D102. NADP(+) contacts are provided by residues 127–131 (GAGGA), 151–156 (NRTVDK), and I219. Y221 contributes to the shikimate binding site. NADP(+) is bound at residue G242.

The protein belongs to the shikimate dehydrogenase family. Homodimer.

It catalyses the reaction shikimate + NADP(+) = 3-dehydroshikimate + NADPH + H(+). Its pathway is metabolic intermediate biosynthesis; chorismate biosynthesis; chorismate from D-erythrose 4-phosphate and phosphoenolpyruvate: step 4/7. Functionally, involved in the biosynthesis of the chorismate, which leads to the biosynthesis of aromatic amino acids. Catalyzes the reversible NADPH linked reduction of 3-dehydroshikimate (DHSA) to yield shikimate (SA). This Bacillus anthracis (strain CDC 684 / NRRL 3495) protein is Shikimate dehydrogenase (NADP(+)).